A 313-amino-acid polypeptide reads, in one-letter code: Protein-methionine-sulfoxide reductase catalytic subunit MsrP (313 aa).

Positions 1-45 (MPAYRPPHIASSEITPKSFYLSRRNFLGTAAGLAAIGLAGREAIA) form a signal peptide, tat-type signal. Mo-molybdopterin contacts are provided by residues N71, 74–75 (YE), C128, T163, N213, R218, and 229–231 (GIK).

This sequence belongs to the MsrP family. Heterodimer of a catalytic subunit (MsrP) and a heme-binding subunit (MsrQ). Mo-molybdopterin is required as a cofactor. In terms of processing, predicted to be exported by the Tat system. The position of the signal peptide cleavage has not been experimentally proven.

It localises to the periplasm. It catalyses the reaction L-methionyl-[protein] + a quinone + H2O = L-methionyl-(S)-S-oxide-[protein] + a quinol. It carries out the reaction L-methionyl-[protein] + a quinone + H2O = L-methionyl-(R)-S-oxide-[protein] + a quinol. Its function is as follows. Part of the MsrPQ system that repairs oxidized periplasmic proteins containing methionine sulfoxide residues (Met-O), using respiratory chain electrons. Thus protects these proteins from oxidative-stress damage caused by reactive species of oxygen and chlorine generated by the host defense mechanisms. MsrPQ is essential for the maintenance of envelope integrity under bleach stress, rescuing a wide series of structurally unrelated periplasmic proteins from methionine oxidation. The catalytic subunit MsrP is non-stereospecific, being able to reduce both (R-) and (S-) diastereoisomers of methionine sulfoxide. This chain is Protein-methionine-sulfoxide reductase catalytic subunit MsrP, found in Agrobacterium fabrum (strain C58 / ATCC 33970) (Agrobacterium tumefaciens (strain C58)).